Consider the following 572-residue polypeptide: Phenylalanine--tRNA ligase beta subunit (572 aa).

A B5 domain is found at 285–363; sequence LSTTTKTVSH…RAFGFNELEP (79 aa). Positions 341, 347, 350, and 351 each coordinate Mg(2+).

This sequence belongs to the phenylalanyl-tRNA synthetase beta subunit family. Type 2 subfamily. In terms of assembly, tetramer of two alpha and two beta subunits. Requires Mg(2+) as cofactor.

Its subcellular location is the cytoplasm. The enzyme catalyses tRNA(Phe) + L-phenylalanine + ATP = L-phenylalanyl-tRNA(Phe) + AMP + diphosphate + H(+). In Natronomonas pharaonis (strain ATCC 35678 / DSM 2160 / CIP 103997 / JCM 8858 / NBRC 14720 / NCIMB 2260 / Gabara) (Halobacterium pharaonis), this protein is Phenylalanine--tRNA ligase beta subunit.